The primary structure comprises 25 residues: Caerin-1.3 (25 aa).

A Leucine amide modification is found at Leu25.

Expressed by the skin parotoid and/or rostral glands.

The protein localises to the secreted. In terms of biological role, antibacterial peptide, that adopts an alpha helical conformation which can disrupt bacterial membranes. Each caerin displays a different antimicrobial specificity. This Ranoidea caerulea (Green tree frog) protein is Caerin-1.3.